A 390-amino-acid chain; its full sequence is Protein snail (390 aa).

Residues Met1–Glu20 are SNAG domain. Disordered regions lie at residues Ala29 to Asp65 and Gln162 to Val191. Composition is skewed to polar residues over residues Lys32–Asp43 and Gln162–Pro172. 5 C2H2-type zinc fingers span residues Phe245 to His267, His280 to His302, Cys306 to His328, Phe334 to His356, and Tyr362 to Cys385.

It belongs to the snail C2H2-type zinc-finger protein family.

It localises to the nucleus. Functionally, essential for the correct specification of ventral-dorsal patterns. In Drosophila melanogaster (Fruit fly), this protein is Protein snail (sna).